The sequence spans 446 residues: Phosphoglucosamine mutase (446 aa).

Catalysis depends on serine 102, which acts as the Phosphoserine intermediate. 4 residues coordinate Mg(2+): serine 102, aspartate 241, aspartate 243, and aspartate 245. Serine 102 is modified (phosphoserine).

It belongs to the phosphohexose mutase family. Mg(2+) is required as a cofactor. Activated by phosphorylation.

The enzyme catalyses alpha-D-glucosamine 1-phosphate = D-glucosamine 6-phosphate. In terms of biological role, catalyzes the conversion of glucosamine-6-phosphate to glucosamine-1-phosphate. The protein is Phosphoglucosamine mutase of Xylella fastidiosa (strain M23).